The chain runs to 170 residues: Fluoride-specific ion channel FluC 2 (170 aa).

The next 4 helical transmembrane spans lie at 8–28, 55–75, 84–104, and 114–134; these read ALVFLGGALGAIIRWTLTVWI, IALLVVNVLGALLLGLLVGMI, TFWGTGVLGGFTSFSSLAAAV, and ILIGGTYGVFTLALGLIAAAM. Positions 92 and 95 each coordinate Na(+).

The protein belongs to the fluoride channel Fluc/FEX (TC 1.A.43) family.

The protein localises to the cell membrane. It catalyses the reaction fluoride(in) = fluoride(out). With respect to regulation, na(+) is not transported, but it plays an essential structural role and its presence is essential for fluoride channel function. Functionally, fluoride-specific ion channel. Important for reducing fluoride concentration in the cell, thus reducing its toxicity. This is Fluoride-specific ion channel FluC 2 from Corynebacterium jeikeium (strain K411).